A 304-amino-acid polypeptide reads, in one-letter code: Peptidyl-prolyl cis-trans isomerase FKBP35 (304 aa).

Residues 37–126 (GNEVTVHYVG…LFEIELLSFR (90 aa)) form the PPIase FKBP-type domain. TPR repeat units follow at residues 144–177 (AFDI…FIHT), 194–227 (ISCN…DKNN), and 228–261 (VKAL…NPNN).

It belongs to the FKBP-type PPIase family. As to quaternary structure, homodimer. Interacts (via TPR repeats) with HSP90 (probably via MEEVD motif).

It is found in the cytoplasm. It localises to the nucleus. It catalyses the reaction [protein]-peptidylproline (omega=180) = [protein]-peptidylproline (omega=0). With respect to regulation, inhibited by FK506 and its derivates, such as ascomycin, and rapamycin. FK506 and rapamycin inhibit peptidylprolyl isomerase activity but not chaperone activity. Inhibited by N-(2-ethyl-phenyl)-2-(3H-imidazao [4, 5-b] pyridin-2-yl-sulfanyl)-acetamide (D44). Not inhibited by cyclosporin A. Inhibition of calcineurin phosphatase activity is enhanced by FK506. In terms of biological role, has peptidylprolyl isomerase (PPIase) and co-chaperone activities. Assists protein folding by catalyzing the peptidyl conversion of cis and trans rotamers of the prolyl amide bond of protein substrates. Inhibits calcineurin phosphatase activity in vitro. Plays an essential role in merozoite egress from host erythrocytes. The protein is Peptidyl-prolyl cis-trans isomerase FKBP35 of Plasmodium falciparum (isolate 3D7).